The chain runs to 466 residues: Ankyrin repeat and SOCS box protein 18 (466 aa).

ANK repeat units lie at residues 119-148 (ELTT…DPDA), 151-180 (GGRG…DPDL), 184-213 (EGLA…SVQR), 218-247 (GRDT…HVDA), 251-288 (RGET…EADA), and 292-321 (DERS…DAGA). The SOCS box domain occupies 405–463 (QMHKPFYQSLFALALTPRCLQHLCRCALRRLFGKRCFDLIPLLPLPKPLQNYLLLEPQG).

The protein belongs to the ankyrin SOCS box (ASB) family.

The protein operates within protein modification; protein ubiquitination. May be a substrate-recognition component of a SCF-like ECS (Elongin-Cullin-SOCS-box protein) E3 ubiquitin-protein ligase complex which mediates the ubiquitination and subsequent proteasomal degradation of target proteins. The polypeptide is Ankyrin repeat and SOCS box protein 18 (ASB18) (Homo sapiens (Human)).